Here is a 538-residue protein sequence, read N- to C-terminus: MDRAKFIFVTGGVLSSLGKGISSSSIATLLQHCNYQVSILKIDPYINIDPGTMSPLEHGEVFVTSDGAETDLDIGHYERFLNRNLTRLNNFTTGQIFSSVIENERKGEYLGKTIQIVPHVTDEIKRRIKSAAKGLDFLIVEVGGTVGDMEGMFYLEAIRQLKLELGNEKVINVHVTLIPYIQTTNELKTKPTQHSVQELRRLGVTPQIILARSPKPLDKELKNKIALSCDVEQDSVIVATDTKSIYACPILFLQEGILTPIARRFNLNKLHPKMAAWNTLVEKIIAPKHKVKIGFVGKYLSLKESYKSLIEALIHAGAHLDTQVNIEWLDSENFNEKTDLEGVDAILVPGGFGERGIEGKICAIQRARLEKLPFLGICLGMQLAIVEFCRNVLGLKGANSTEFNQRCEYPVVYLIGDFMDQNHQKQVRTYNSPLGGTMRLGEYECEIMPNSLLEKAYKKPSIKERHRHRYEINPKYRQEWENKGLKVVGFGSNHLIEAIELEDHPFFVGVQFHPEFTSRLQSPNPIILDFIKSALSKS.

The interval 1 to 267 is amidoligase domain; the sequence is MDRAKFIFVT…LTPIARRFNL (267 aa). Serine 15 is a binding site for CTP. Serine 15 contributes to the UTP binding site. ATP-binding positions include 16–21 and aspartate 73; that span reads SLGKGI. 2 residues coordinate Mg(2+): aspartate 73 and glutamate 141. CTP-binding positions include 148–150, 188–193, and lysine 224; these read DME and KTKPTQ. Residues 188–193 and lysine 224 each bind UTP; that span reads KTKPTQ. In terms of domain architecture, Glutamine amidotransferase type-1 spans 292–538; it reads KIGFVGKYLS…DFIKSALSKS (247 aa). Position 351 (glycine 351) interacts with L-glutamine. Residue cysteine 378 is the Nucleophile; for glutamine hydrolysis of the active site. Residues 379 to 382, glutamate 402, and arginine 469 contribute to the L-glutamine site; that span reads LGMQ. Active-site residues include histidine 513 and glutamate 515.

This sequence belongs to the CTP synthase family. Homotetramer.

It carries out the reaction UTP + L-glutamine + ATP + H2O = CTP + L-glutamate + ADP + phosphate + 2 H(+). The catalysed reaction is L-glutamine + H2O = L-glutamate + NH4(+). It catalyses the reaction UTP + NH4(+) + ATP = CTP + ADP + phosphate + 2 H(+). Its pathway is pyrimidine metabolism; CTP biosynthesis via de novo pathway; CTP from UDP: step 2/2. Its activity is regulated as follows. Allosterically activated by GTP, when glutamine is the substrate; GTP has no effect on the reaction when ammonia is the substrate. The allosteric effector GTP functions by stabilizing the protein conformation that binds the tetrahedral intermediate(s) formed during glutamine hydrolysis. Inhibited by the product CTP, via allosteric rather than competitive inhibition. Its function is as follows. Catalyzes the ATP-dependent amination of UTP to CTP with either L-glutamine or ammonia as the source of nitrogen. Regulates intracellular CTP levels through interactions with the four ribonucleotide triphosphates. The protein is CTP synthase of Helicobacter pylori (strain ATCC 700392 / 26695) (Campylobacter pylori).